Here is a 223-residue protein sequence, read N- to C-terminus: Charged multivesicular body protein 3 (223 aa).

G2 is lipidated: N-myristoyl glycine. The segment at 2–113 (GLFGKTQEKP…LQKSTEVMKA (112 aa)) is intramolecular interaction with C-terminus. Residues 22–54 (KIRKEMRVVDRQIRDIQREEEKVKRSVKDAAKK) adopt a coiled-coil conformation. Important for autoinhibitory function regions lie at residues 59 to 64 (VCVVLA) and 168 to 169 (IL). The stretch at 149–223 (ESMDDQEEME…MQSRLATLRS (75 aa)) forms a coiled coil. Positions 151–221 (MDDQEEMEEA…EAMQSRLATL (71 aa)) are intramolecular interaction with N-terminus. Residues 151–223 (MDDQEEMEEA…MQSRLATLRS (73 aa)) form an interaction with VPS4A region. Residue K179 forms a Glycyl lysine isopeptide (Lys-Gly) (interchain with G-Cter in ubiquitin) linkage. The interval 180–223 (APSKVTDALPEPEPAGAMAASEGDEEDDEEDLEAMQSRLATLRS) is disordered. Interaction with STAMBP regions lie at residues 196-223 (AMAA…TLRS), 204-208 (EEDDE), and 222-223 (RS). Position 200 is a phosphoserine (S200). Residues 201–212 (EGDEEDDEEDLE) carry the MIT-interacting motif motif. The segment covering 201-212 (EGDEEDDEEDLE) has biased composition (acidic residues).

It belongs to the SNF7 family. In terms of assembly, probable core component of the endosomal sorting required for transport complex III (ESCRT-III). ESCRT-III components are thought to multimerize to form a flat lattice on the perimeter membrane of the endosome. Several assembly forms of ESCRT-III may exist that interact and act sequentially. Forms a metastable monomer in solution; its core structure (without part of the putative autoinhibitory C-terminal acidic region) oligomerizes into a flat lattice via two different dimerization interfaces. In vitro, heteromerizes with CHMP2A (but not CHMP4) to form helical tubular structures that expose membrane-interacting sites on the outside whereas VPS4B can associate on the inside of the tubule. May interact with IGFBP7; the relevance of such interaction however remains unclear. Interacts with CHMP2A. Interacts with CHMP4A; the interaction requires the release of CHMP4A autoinhibition. Interacts with VPS4A. Interacts with STAMBP; the interaction appears to relieve the autoinhibition of CHMP3. Interacts with VTA1.

The protein localises to the cytoplasm. It is found in the cytosol. The protein resides in the membrane. It localises to the endosome. Its subcellular location is the late endosome membrane. Functionally, probable core component of the endosomal sorting required for transport complex III (ESCRT-III) which is involved in multivesicular bodies (MVBs) formation and sorting of endosomal cargo proteins into MVBs. MVBs contain intraluminal vesicles (ILVs) that are generated by invagination and scission from the limiting membrane of the endosome and mostly are delivered to lysosomes enabling degradation of membrane proteins, such as stimulated growth factor receptors, lysosomal enzymes and lipids. The MVB pathway appears to require the sequential function of ESCRT-O, -I,-II and -III complexes. ESCRT-III proteins mostly dissociate from the invaginating membrane before the ILV is released. The ESCRT machinery also functions in topologically equivalent membrane fission events, such as the terminal stages of cytokinesis. ESCRT-III proteins are believed to mediate the necessary vesicle extrusion and/or membrane fission activities, possibly in conjunction with the AAA ATPase VPS4. Selectively binds to phosphatidylinositol 3,5-bisphosphate PtdIns(3,5)P2 and PtdIns(3,4)P2 in preference to other phosphoinositides tested. Involved in late stages of cytokinesis. Plays a role in endosomal sorting/trafficking of EGF receptor. This Rattus norvegicus (Rat) protein is Charged multivesicular body protein 3 (Chmp3).